A 197-amino-acid polypeptide reads, in one-letter code: Imidazoleglycerol-phosphate dehydratase (197 aa).

Belongs to the imidazoleglycerol-phosphate dehydratase family.

The protein resides in the cytoplasm. It catalyses the reaction D-erythro-1-(imidazol-4-yl)glycerol 3-phosphate = 3-(imidazol-4-yl)-2-oxopropyl phosphate + H2O. Its pathway is amino-acid biosynthesis; L-histidine biosynthesis; L-histidine from 5-phospho-alpha-D-ribose 1-diphosphate: step 6/9. The chain is Imidazoleglycerol-phosphate dehydratase from Bradyrhizobium diazoefficiens (strain JCM 10833 / BCRC 13528 / IAM 13628 / NBRC 14792 / USDA 110).